We begin with the raw amino-acid sequence, 485 residues long: Glutamyl-tRNA(Gln) amidotransferase subunit A (485 aa).

Active-site charge relay system residues include Lys-78 and Ser-153. Ser-177 (acyl-ester intermediate) is an active-site residue.

It belongs to the amidase family. GatA subfamily. Heterotrimer of A, B and C subunits.

The catalysed reaction is L-glutamyl-tRNA(Gln) + L-glutamine + ATP + H2O = L-glutaminyl-tRNA(Gln) + L-glutamate + ADP + phosphate + H(+). In terms of biological role, allows the formation of correctly charged Gln-tRNA(Gln) through the transamidation of misacylated Glu-tRNA(Gln) in organisms which lack glutaminyl-tRNA synthetase. The reaction takes place in the presence of glutamine and ATP through an activated gamma-phospho-Glu-tRNA(Gln). In Bacillus anthracis (strain A0248), this protein is Glutamyl-tRNA(Gln) amidotransferase subunit A.